We begin with the raw amino-acid sequence, 150 residues long: UPF0178 protein Shew_2726 (150 aa).

It belongs to the UPF0178 family.

The protein is UPF0178 protein Shew_2726 of Shewanella loihica (strain ATCC BAA-1088 / PV-4).